Here is a 183-residue protein sequence, read N- to C-terminus: Negative modulator of initiation of replication (183 aa).

Residues Val-43–Arg-70 form a disordered region. Low complexity predominate over residues Ser-50–Ala-61. Interaction with DNA stretches follow at residues Ala-89–Val-90, Arg-118–Tyr-122, and Asn-152–Lys-158.

Belongs to the SeqA family. In terms of assembly, homodimer. Polymerizes to form helical filaments.

It localises to the cytoplasm. Its function is as follows. Negative regulator of replication initiation, which contributes to regulation of DNA replication and ensures that replication initiation occurs exactly once per chromosome per cell cycle. Binds to pairs of hemimethylated GATC sequences in the oriC region, thus preventing assembly of replication proteins and re-initiation at newly replicated origins. Repression is relieved when the region becomes fully methylated. The polypeptide is Negative modulator of initiation of replication (Pantoea ananatis (strain AJ13355)).